Reading from the N-terminus, the 400-residue chain is Serine/threonine transporter SstT (400 aa).

9 helical membrane-spanning segments follow: residues 9 to 29 (LVTQIAIAVVIGIVLAAVWPA), 36 to 56 (ILGSLFISALKAVAPVLVFVL), 75 to 95 (VLVLYAVGTLAAATVGVVASM), 134 to 154 (ALLEANYIGILAWAIALGLAL), 175 to 195 (VIQLVIRLAPLGILGLVASTF), 209 to 229 (LLAVLLGCMLFVALVVNPLIV), 281 to 301 (IAIPLGATINMAGAAITISVL), 323 to 343 (VVASLCACGASGVAGGSLLLI), and 349 to 369 (LFGIGNDVAMQVVAIGFIIGI).

The protein belongs to the dicarboxylate/amino acid:cation symporter (DAACS) (TC 2.A.23) family.

Its subcellular location is the cell inner membrane. The enzyme catalyses L-serine(in) + Na(+)(in) = L-serine(out) + Na(+)(out). The catalysed reaction is L-threonine(in) + Na(+)(in) = L-threonine(out) + Na(+)(out). In terms of biological role, involved in the import of serine and threonine into the cell, with the concomitant import of sodium (symport system). The polypeptide is Serine/threonine transporter SstT (Acidovorax sp. (strain JS42)).